Consider the following 472-residue polypeptide: Argininosuccinate lyase (472 aa).

It belongs to the lyase 1 family. Argininosuccinate lyase subfamily.

It is found in the cytoplasm. The enzyme catalyses 2-(N(omega)-L-arginino)succinate = fumarate + L-arginine. It participates in amino-acid biosynthesis; L-arginine biosynthesis; L-arginine from L-ornithine and carbamoyl phosphate: step 3/3. This chain is Argininosuccinate lyase, found in Rhodococcus jostii (strain RHA1).